Here is a 338-residue protein sequence, read N- to C-terminus: Ketol-acid reductoisomerase (NADP(+)) (338 aa).

The KARI N-terminal Rossmann domain occupies 1-181 (MRVFYDKDCD…GGGRTGIIET (181 aa)). NADP(+) is bound by residues 24-27 (YGSQ), Arg-47, Ser-50, Thr-52, and 82-85 (DEFQ). His-107 is an active-site residue. An NADP(+)-binding site is contributed by Gly-133. One can recognise a KARI C-terminal knotted domain in the interval 182-327 (TFKDETETDL…EKLRAMMPWI (146 aa)). Asp-190, Glu-194, Glu-226, and Glu-230 together coordinate Mg(2+). Residue Ser-251 coordinates substrate.

The protein belongs to the ketol-acid reductoisomerase family. Requires Mg(2+) as cofactor.

The enzyme catalyses (2R)-2,3-dihydroxy-3-methylbutanoate + NADP(+) = (2S)-2-acetolactate + NADPH + H(+). It catalyses the reaction (2R,3R)-2,3-dihydroxy-3-methylpentanoate + NADP(+) = (S)-2-ethyl-2-hydroxy-3-oxobutanoate + NADPH + H(+). It participates in amino-acid biosynthesis; L-isoleucine biosynthesis; L-isoleucine from 2-oxobutanoate: step 2/4. Its pathway is amino-acid biosynthesis; L-valine biosynthesis; L-valine from pyruvate: step 2/4. In terms of biological role, involved in the biosynthesis of branched-chain amino acids (BCAA). Catalyzes an alkyl-migration followed by a ketol-acid reduction of (S)-2-acetolactate (S2AL) to yield (R)-2,3-dihydroxy-isovalerate. In the isomerase reaction, S2AL is rearranged via a Mg-dependent methyl migration to produce 3-hydroxy-3-methyl-2-ketobutyrate (HMKB). In the reductase reaction, this 2-ketoacid undergoes a metal-dependent reduction by NADPH to yield (R)-2,3-dihydroxy-isovalerate. This is Ketol-acid reductoisomerase (NADP(+)) from Pseudomonas paraeruginosa (strain DSM 24068 / PA7) (Pseudomonas aeruginosa (strain PA7)).